We begin with the raw amino-acid sequence, 197 residues long: dITP/XTP pyrophosphatase (197 aa).

Residue 8-13 (TGNPGK) coordinates substrate. Glu40 and Asp69 together coordinate Mg(2+). Residue Asp69 is the Proton acceptor of the active site. Residues Ser70, 154–157 (FGYD), Lys177, and 182–183 (HR) each bind substrate.

Belongs to the HAM1 NTPase family. As to quaternary structure, homodimer. Requires Mg(2+) as cofactor.

It carries out the reaction XTP + H2O = XMP + diphosphate + H(+). The enzyme catalyses dITP + H2O = dIMP + diphosphate + H(+). The catalysed reaction is ITP + H2O = IMP + diphosphate + H(+). In terms of biological role, pyrophosphatase that catalyzes the hydrolysis of nucleoside triphosphates to their monophosphate derivatives, with a high preference for the non-canonical purine nucleotides XTP (xanthosine triphosphate), dITP (deoxyinosine triphosphate) and ITP. Seems to function as a house-cleaning enzyme that removes non-canonical purine nucleotides from the nucleotide pool, thus preventing their incorporation into DNA/RNA and avoiding chromosomal lesions. This Photorhabdus laumondii subsp. laumondii (strain DSM 15139 / CIP 105565 / TT01) (Photorhabdus luminescens subsp. laumondii) protein is dITP/XTP pyrophosphatase.